The following is a 115-amino-acid chain: Large ribosomal subunit protein bL19 (115 aa).

This sequence belongs to the bacterial ribosomal protein bL19 family.

In terms of biological role, this protein is located at the 30S-50S ribosomal subunit interface and may play a role in the structure and function of the aminoacyl-tRNA binding site. The chain is Large ribosomal subunit protein bL19 from Lactobacillus delbrueckii subsp. bulgaricus (strain ATCC BAA-365 / Lb-18).